The chain runs to 743 residues: Envelope glycoprotein H (743 aa).

The N-terminal stretch at 1–23 is a signal peptide; it reads MRPGLPPYLTVFTVYLLSHLPSQ. The Virion surface portion of the chain corresponds to 24–720; that stretch reads RYGADAASEA…VVDATDSRLL (697 aa). 4 N-linked (GlcNAc...) asparagine; by host glycosylation sites follow: Asn-56, Asn-63, Asn-68, and Asn-193. An interaction with gL region spans residues 218–281; the sequence is YLMDELRYVK…QTEKHELLVL (64 aa). 2 N-linked (GlcNAc...) asparagine; by host glycosylation sites follow: Asn-642 and Asn-701. A helical transmembrane segment spans residues 721–741; the sequence is MMSVYALSAIIGIYLLYRMLK. The Intravirion portion of the chain corresponds to 742–743; sequence TC.

The protein belongs to the herpesviridae glycoprotein H family. As to quaternary structure, interacts with glycoprotein L (gL); this interaction is necessary for the correct processing and cell surface expression of gH. The heterodimer gH/gL seems to interact with gB trimers during fusion. Forms the envelope pentamer complex (PC) composed of gH, gL, UL128, UL130, and UL131A. The pentamer interacts with host NRP2. Forms the envelope trimer complex composed of gH, gL, and gO. The trimer interacts with host PDGFRA. The trimer also interacts with host EPHA2. Interacts with UL116. In terms of processing, N-glycosylated, O-glycosylated, and sialylated.

It is found in the virion membrane. The protein localises to the host cell membrane. It localises to the host endosome membrane. Functionally, the heterodimer glycoprotein H-glycoprotein L is required for the fusion of viral and plasma membranes leading to virus entry into the host cell. Following initial binding to host receptor, membrane fusion is mediated by the fusion machinery composed of gB and the heterodimer gH/gL. May also be involved in the fusion between the virion envelope and the outer nuclear membrane during virion morphogenesis. In human cytomegalovirus, forms two distincts complexes to mediate viral entry, a trimer and a pentamer at the surface of the virion envelope. The gH-gL-gO trimer is required for infection in fibroblasts by interacting with host PDGFRA, and in glioblastoma cells by interacting with host EPHA2. The gH-gL-UL128-UL130-UL131A pentamer is essential for viral entry in epithelial, endothelial and myeloid cells via interaction with host NRP2. In Human cytomegalovirus (strain AD169) (HHV-5), this protein is Envelope glycoprotein H.